We begin with the raw amino-acid sequence, 342 residues long: Cytochrome c oxidase subunit 2 (342 aa).

The N-terminal stretch at 1 to 22 is a signal peptide; it reads MKLWKTASRFLPLSFLTLFLTG. Cysteine 23 carries the N-palmitoyl cysteine lipid modification. Cysteine 23 is lipidated: S-diacylglycerol cysteine. The Extracellular segment spans residues 23–50; that stretch reads CLGEENLTALDPKGPQAQWIYDNMILSI. The cytochrome c oxidase subunit II stretch occupies residues 23–249; sequence CLGEENLTAL…MSAEVEEPTE (227 aa). The chain crosses the membrane as a helical span at residues 51 to 69; the sequence is IVMALVSIVVFAIFFIILA. Topologically, residues 70 to 89 are cytoplasmic; it reads KYRRKPGDDEIPKQVHGNTA. The chain crosses the membrane as a helical span at residues 90–108; that stretch reads LEITWTVIPIILLVILAVP. The Extracellular portion of the chain corresponds to 109–342; sequence TITGTFMFAD…AYLRSLKVME (234 aa). Histidine 175, cysteine 210, cysteine 214, and histidine 218 together coordinate Cu cation. The region spanning 250-342 is the Cytochrome c domain; sequence TLANQGRQVF…AYLRSLKVME (93 aa). Cysteine 264, cysteine 267, histidine 268, and methionine 317 together coordinate heme c.

This sequence belongs to the cytochrome c oxidase subunit 2 family. Requires Cu cation as cofactor. Heme c is required as a cofactor.

The protein resides in the cell membrane. The enzyme catalyses 4 Fe(II)-[cytochrome c] + O2 + 8 H(+)(in) = 4 Fe(III)-[cytochrome c] + 2 H2O + 4 H(+)(out). In terms of biological role, subunits I and II form the functional core of the enzyme complex. Electrons originating in cytochrome c are transferred via heme a and Cu(A) to the binuclear center formed by heme a3 and Cu(B). The chain is Cytochrome c oxidase subunit 2 (ctaC) from Alkalihalophilus pseudofirmus (strain ATCC BAA-2126 / JCM 17055 / OF4) (Bacillus pseudofirmus).